Consider the following 176-residue polypeptide: Alkyl hydroperoxide reductase AhpD (176 aa).

Residue cysteine 131 is the Proton donor of the active site. A disulfide bridge links cysteine 131 with cysteine 134. The active-site Cysteine sulfenic acid (-SOH) intermediate is the cysteine 134.

Belongs to the AhpD family.

The enzyme catalyses N(6)-[(R)-dihydrolipoyl]-L-lysyl-[lipoyl-carrier protein] + a hydroperoxide = N(6)-[(R)-lipoyl]-L-lysyl-[lipoyl-carrier protein] + an alcohol + H2O. Functionally, antioxidant protein with alkyl hydroperoxidase activity. Required for the reduction of the AhpC active site cysteine residues and for the regeneration of the AhpC enzyme activity. The chain is Alkyl hydroperoxide reductase AhpD from Methylobacterium sp. (strain 4-46).